A 200-amino-acid chain; its full sequence is Imidazoleglycerol-phosphate dehydratase (200 aa).

Belongs to the imidazoleglycerol-phosphate dehydratase family.

It is found in the cytoplasm. It carries out the reaction D-erythro-1-(imidazol-4-yl)glycerol 3-phosphate = 3-(imidazol-4-yl)-2-oxopropyl phosphate + H2O. It participates in amino-acid biosynthesis; L-histidine biosynthesis; L-histidine from 5-phospho-alpha-D-ribose 1-diphosphate: step 6/9. This chain is Imidazoleglycerol-phosphate dehydratase, found in Renibacterium salmoninarum (strain ATCC 33209 / DSM 20767 / JCM 11484 / NBRC 15589 / NCIMB 2235).